The sequence spans 105 residues: uncharacterized protein (105 aa).

This is an uncharacterized protein from Bacillus subtilis (strain 168).